Here is a 398-residue protein sequence, read N- to C-terminus: DNA polymerase IV (398 aa).

A UmuC domain is found at 5–187 (IFLVDMNAFF…LSIKSMHGVG (183 aa)). Mg(2+) is bound by residues Asp9 and Asp105. Residue Glu106 is part of the active site.

This sequence belongs to the DNA polymerase type-Y family. In terms of assembly, monomer. Mg(2+) serves as cofactor.

It is found in the cytoplasm. The enzyme catalyses DNA(n) + a 2'-deoxyribonucleoside 5'-triphosphate = DNA(n+1) + diphosphate. Its function is as follows. Poorly processive, error-prone DNA polymerase involved in untargeted mutagenesis. Copies undamaged DNA at stalled replication forks, which arise in vivo from mismatched or misaligned primer ends. These misaligned primers can be extended by PolIV. Exhibits no 3'-5' exonuclease (proofreading) activity. May be involved in translesional synthesis, in conjunction with the beta clamp from PolIII. The sequence is that of DNA polymerase IV from Alkaliphilus oremlandii (strain OhILAs) (Clostridium oremlandii (strain OhILAs)).